A 474-amino-acid chain; its full sequence is 15-cis-phytoene desaturase (474 aa).

This sequence belongs to the carotenoid/retinoid oxidoreductase family.

Its subcellular location is the cell membrane. The catalysed reaction is 2 a plastoquinone + 15-cis-phytoene = 9,9',15-tri-cis-zeta-carotene + 2 a plastoquinol. Its pathway is carotenoid biosynthesis; lycopene biosynthesis. Inhibited by the herbicide norflurazon in a non-competitive way. In terms of biological role, this enzyme converts phytoene into zeta-carotene via the intermediary of phytofluene by the symmetrical introduction of two double bonds at the C-11 and C-11' positions of phytoene. Also active with phytofluene and 1,2-epoxyphytoene as substrates. This is 15-cis-phytoene desaturase (pds) from Synechococcus elongatus (strain ATCC 33912 / PCC 7942 / FACHB-805) (Anacystis nidulans R2).